The following is a 395-amino-acid chain: L-rhamnonate dehydratase (395 aa).

Substrate-binding residues include His-23 and Arg-49. Mg(2+) contacts are provided by Asp-215, Glu-241, and Glu-269. His-319 serves as the catalytic Proton acceptor. A substrate-binding site is contributed by Glu-339.

Belongs to the mandelate racemase/muconate lactonizing enzyme family. RhamD subfamily. As to quaternary structure, homooctamer; tetramer of dimers. Mg(2+) is required as a cofactor.

The enzyme catalyses L-rhamnonate = 2-dehydro-3-deoxy-L-rhamnonate + H2O. In terms of biological role, catalyzes the dehydration of L-rhamnonate to 2-keto-3-deoxy-L-rhamnonate (KDR). In Polaromonas sp. (strain JS666 / ATCC BAA-500), this protein is L-rhamnonate dehydratase (rhmD).